The following is a 556-amino-acid chain: Formate--tetrahydrofolate ligase (556 aa).

65–72 (TPAGEGKT) serves as a coordination point for ATP.

It belongs to the formate--tetrahydrofolate ligase family.

It catalyses the reaction (6S)-5,6,7,8-tetrahydrofolate + formate + ATP = (6R)-10-formyltetrahydrofolate + ADP + phosphate. It functions in the pathway one-carbon metabolism; tetrahydrofolate interconversion. This chain is Formate--tetrahydrofolate ligase, found in Symbiobacterium thermophilum (strain DSM 24528 / JCM 14929 / IAM 14863 / T).